Consider the following 274-residue polypeptide: Large ribosomal subunit protein uL2 (274 aa).

A disordered region spans residues 222–274 (GVAMNPVDHPHGGGEGRGKGHHPQSPWGQLAKGYKTRRGKKASDKLIVRRRNG). Positions 229–239 (DHPHGGGEGRG) are enriched in basic and acidic residues.

The protein belongs to the universal ribosomal protein uL2 family. Part of the 50S ribosomal subunit. Forms a bridge to the 30S subunit in the 70S ribosome.

One of the primary rRNA binding proteins. Required for association of the 30S and 50S subunits to form the 70S ribosome, for tRNA binding and peptide bond formation. It has been suggested to have peptidyltransferase activity; this is somewhat controversial. Makes several contacts with the 16S rRNA in the 70S ribosome. The sequence is that of Large ribosomal subunit protein uL2 from Thermosipho africanus (strain TCF52B).